Consider the following 2611-residue polypeptide: Highly reducing polyketide synthase ATEG_07659 (2611 aa).

One can recognise a Ketosynthase family 3 (KS3) domain in the interval 10–409 (SEPIAIIGLS…GTNSHVIVEG (400 aa)). Catalysis depends on for beta-ketoacyl synthase activity residues Cys-157, His-292, and His-330. Residues 537 to 844 (MVFTGQGAQW…VRFVEAFTDM (308 aa)) are malonyl-CoA:ACP transacylase (MAT) domain. An N-terminal hotdog fold region spans residues 969 to 1109 (HDLLGVLVPG…GLITVQMAAD (141 aa)). Positions 969 to 1292 (HDLLGVLVPG…CQSLGRSAPG (324 aa)) constitute a PKS/mFAS DH domain. Positions 970-1289 (DLLGVLVPGT…GLVCQSLGRS (320 aa)) are dehydratase (DH) domain. The active-site Proton acceptor; for dehydratase activity is the His-1001. The C-terminal hotdog fold stretch occupies residues 1128-1292 (GYTRRIDPQD…CQSLGRSAPG (165 aa)). Residue Asp-1199 is the Proton donor; for dehydratase activity of the active site. The segment at 1469-1602 (FGQLKSLLAA…GATLLLMETT (134 aa)) is methyltransferase (CMet) domain. Residues 1898–2213 (GLLDTLAFGD…TGKHLGKLVL (316 aa)) are enoyl reductase (ER) domain. A ketoreductase (KR) domain region spans residues 2236-2416 (ASYLLVGGVG…AVSLDMGVIK (181 aa)). Over residues 2499–2509 (SRAQAQQAGGD) the composition is skewed to low complexity. The tract at residues 2499–2520 (SRAQAQQAGGDSDSEPLSAKLR) is disordered. Residues 2527–2604 (AAARCVGDAI…ALALDVVAKS (78 aa)) form the Carrier domain. Ser-2564 carries the O-(pantetheine 4'-phosphoryl)serine modification.

It participates in secondary metabolite biosynthesis. Highly reducing polyketide synthase; part of the cluster B that mediates the biosynthesis of azasperpyranones, members of the azaphilone family that exhibit anti-cancer activities. Azasperpyranones are synthesized by 2 clusters, A and B. Cluster A is responsible for the production of the polyhydric phenol moiety while the azaphilonoid scaffold is produced by the cluster B. The non-reducing polyketide synthase ATEG_03629 produces 5-methyl orsellinic acid, which is then reduced to 5-methyl orsellinic aldehyde by the NRPS-like protein ATEG_03630. 5-methyl orsellinic aldehyde is then first hydroxylated by the FAD-dependent monooxygenase ATEG_03635 and subsequently hydroxylated by the cytochrome P450 monooxygenase ATEG_03631 to produce the unstable polyhydric phenol precursor of azasperpyranones. On the other hand, the polyketide synthase ATEG_07659 is responsible for producing the 3,5-dimethyloctadienone moiety from acetyl-CoA, three malonyl-CoA, and two S-adenosyl methionines (SAM). The 3,5-dimethyloctadienone moiety is then loaded onto the SAT domain of ATEG_07661 and extended with four malonyl-CoA and one SAM, which leads to the formation of 2,4-dihydroxy-6-(5,7-dimethyl-2-oxo-trans-3-trans-5-nonadienyl)-3-methylbenzaldehyde (compound 8) after reductive release and aldol condensation. The FAD-dependent monooxygenase ATEG_07662 is the next enzyme in the biosynthesis sequence and hydroxylates the side chain at the benzylic position of compound 8. In Aspergillus nidulans, afoF, the ortholog of the FAD-dependent oxygenase ATEG_07660, is the key enzyme for the biosynthesis of asperfuranone by catalyzing the hydroxylation at C-8 of to prevent the formation of a six-membered ring hemiacetal intermediate and thus facilitating the formation of a five-membered ring to produce asperfuranone. In Aspergillus terreus, ATEG_07660 is probably not functional, which leads to the formation of the six-membered ring hemiacetal intermediate presperpyranone instead of asperfuranone. Finally, ATEG_03636 is involved in the condensation of the polyhydric phenol moiety produced by cluster A and the perasperpyranone precursor produced by cluster B, to yield azasperpyranone A. Further modifications of azasperpyranone A result in the production of derivatives, including azasperpyranone B to F. The polypeptide is Highly reducing polyketide synthase ATEG_07659 (Aspergillus terreus (strain NIH 2624 / FGSC A1156)).